The chain runs to 439 residues: tRNA modification GTPase MnmE (439 aa).

The (6S)-5-formyl-5,6,7,8-tetrahydrofolate site is built by arginine 23, glutamate 80, and lysine 120. The 149-residue stretch at 217–365 (GLKIVIAGEP…LLTALQSHLP (149 aa)) folds into the TrmE-type G domain. Asparagine 227 contacts K(+). Residues 227–232 (NAGKSS), 246–252 (TEVAGTT), and 271–274 (DTAG) contribute to the GTP site. Position 231 (serine 231) interacts with Mg(2+). K(+) contacts are provided by threonine 246, valine 248, and threonine 251. Threonine 252 provides a ligand contact to Mg(2+). Lysine 439 lines the (6S)-5-formyl-5,6,7,8-tetrahydrofolate pocket.

It belongs to the TRAFAC class TrmE-Era-EngA-EngB-Septin-like GTPase superfamily. TrmE GTPase family. In terms of assembly, homodimer. Heterotetramer of two MnmE and two MnmG subunits. The cofactor is K(+).

Its subcellular location is the cytoplasm. Exhibits a very high intrinsic GTPase hydrolysis rate. Involved in the addition of a carboxymethylaminomethyl (cmnm) group at the wobble position (U34) of certain tRNAs, forming tRNA-cmnm(5)s(2)U34. This is tRNA modification GTPase MnmE from Rhizobium meliloti (strain 1021) (Ensifer meliloti).